The chain runs to 210 residues: Na(+)-translocating NADH-quinone reductase subunit D (210 aa).

5 helical membrane-spanning segments follow: residues 42–62 (FVMT…VSLI), 72–92 (IIVQ…ILKA), 103–123 (VFVG…AFAM), 131–151 (LIDG…VGFF), and 178–198 (NGLM…IWAI).

It belongs to the NqrDE/RnfAE family. Composed of six subunits; NqrA, NqrB, NqrC, NqrD, NqrE and NqrF.

It localises to the cell inner membrane. The enzyme catalyses a ubiquinone + n Na(+)(in) + NADH + H(+) = a ubiquinol + n Na(+)(out) + NAD(+). Functionally, NQR complex catalyzes the reduction of ubiquinone-1 to ubiquinol by two successive reactions, coupled with the transport of Na(+) ions from the cytoplasm to the periplasm. NqrA to NqrE are probably involved in the second step, the conversion of ubisemiquinone to ubiquinol. This is Na(+)-translocating NADH-quinone reductase subunit D from Vibrio vulnificus (strain CMCP6).